Consider the following 147-residue polypeptide: Histone H2B (147 aa).

Basic and acidic residues predominate over residues methionine 1–proline 31. The tract at residues methionine 1–lysine 55 is disordered. Residues lysine 7, lysine 35, and lysine 36 each carry the N6-acetyllysine modification. Lysine 143 is covalently cross-linked (Glycyl lysine isopeptide (Lys-Gly) (interchain with G-Cter in ubiquitin)).

This sequence belongs to the histone H2B family. The nucleosome is a histone octamer containing two molecules each of H2A, H2B, H3 and H4 assembled in one H3-H4 heterotetramer and two H2A-H2B heterodimers. The octamer wraps approximately 147 bp of DNA. Post-translationally, can be acetylated to form H2BK6ac, H2BK33ac and H2BK34ac. In terms of processing, monoubiquitinated to form H2BK143ub1; may give a specific tag for epigenetic transcriptional activation.

It is found in the nucleus. It localises to the chromosome. Core component of nucleosome. Nucleosomes wrap and compact DNA into chromatin, limiting DNA accessibility to the cellular machineries which require DNA as a template. Histones thereby play a central role in transcription regulation, DNA repair, DNA replication and chromosomal stability. DNA accessibility is regulated via a complex set of post-translational modifications of histones, also called histone code, and nucleosome remodeling. This chain is Histone H2B (HIS2B), found in Gossypium hirsutum (Upland cotton).